A 489-amino-acid chain; its full sequence is Rhamnulokinase (489 aa).

13 to 17 (ASSGR) provides a ligand contact to ATP. Cys68 and Cys222 form a disulfide bridge. Substrate contacts are provided by residues Gly83 and 236-238 (HDT). The active-site Proton acceptor is Asp237. Position 259 (Thr259) interacts with ATP. Asn296 contacts substrate. Gln304 contributes to the ATP binding site. An intrachain disulfide couples Cys353 to Cys370. Gly402 contributes to the ATP binding site. A disulfide bridge connects residues Cys413 and Cys417.

It belongs to the rhamnulokinase family. The cofactor is Mg(2+).

The enzyme catalyses L-rhamnulose + ATP = L-rhamnulose 1-phosphate + ADP + H(+). Its pathway is carbohydrate degradation; L-rhamnose degradation; glycerone phosphate from L-rhamnose: step 2/3. Its function is as follows. Involved in the catabolism of L-rhamnose (6-deoxy-L-mannose). Catalyzes the transfer of the gamma-phosphate group from ATP to the 1-hydroxyl group of L-rhamnulose to yield L-rhamnulose 1-phosphate. The polypeptide is Rhamnulokinase (Salmonella enteritidis PT4 (strain P125109)).